Here is a 214-residue protein sequence, read N- to C-terminus: Guanylate kinase (214 aa).

In terms of domain architecture, Guanylate kinase-like spans 6–192 (GTLYIISAPS…ALEDLKSIFR (187 aa)). Residue 13–20 (APSGAGKT) participates in ATP binding.

The protein belongs to the guanylate kinase family.

It is found in the cytoplasm. It catalyses the reaction GMP + ATP = GDP + ADP. Essential for recycling GMP and indirectly, cGMP. This Pseudomonas syringae pv. tomato (strain ATCC BAA-871 / DC3000) protein is Guanylate kinase.